A 699-amino-acid chain; its full sequence is Elongation factor G (699 aa).

The tr-type G domain occupies 8-290; sequence NKYRNLGIMA…KVIELLPSPV (283 aa). GTP is bound by residues 17–24, 88–92, and 142–145; these read AHIDAGKT, DTPGH, and NKMD.

It belongs to the TRAFAC class translation factor GTPase superfamily. Classic translation factor GTPase family. EF-G/EF-2 subfamily.

It localises to the cytoplasm. Its function is as follows. Catalyzes the GTP-dependent ribosomal translocation step during translation elongation. During this step, the ribosome changes from the pre-translocational (PRE) to the post-translocational (POST) state as the newly formed A-site-bound peptidyl-tRNA and P-site-bound deacylated tRNA move to the P and E sites, respectively. Catalyzes the coordinated movement of the two tRNA molecules, the mRNA and conformational changes in the ribosome. The sequence is that of Elongation factor G from Dichelobacter nodosus (strain VCS1703A).